A 286-amino-acid polypeptide reads, in one-letter code: Bifunctional protein FolD (286 aa).

NADP(+) is bound by residues 166–168 (GQS), S191, and I232.

The protein belongs to the tetrahydrofolate dehydrogenase/cyclohydrolase family. As to quaternary structure, homodimer.

The enzyme catalyses (6R)-5,10-methylene-5,6,7,8-tetrahydrofolate + NADP(+) = (6R)-5,10-methenyltetrahydrofolate + NADPH. It catalyses the reaction (6R)-5,10-methenyltetrahydrofolate + H2O = (6R)-10-formyltetrahydrofolate + H(+). It participates in one-carbon metabolism; tetrahydrofolate interconversion. Catalyzes the oxidation of 5,10-methylenetetrahydrofolate to 5,10-methenyltetrahydrofolate and then the hydrolysis of 5,10-methenyltetrahydrofolate to 10-formyltetrahydrofolate. The chain is Bifunctional protein FolD from Alkalilimnicola ehrlichii (strain ATCC BAA-1101 / DSM 17681 / MLHE-1).